We begin with the raw amino-acid sequence, 187 residues long: Ribosome-recycling factor (187 aa).

It belongs to the RRF family.

Its subcellular location is the cytoplasm. Functionally, responsible for the release of ribosomes from messenger RNA at the termination of protein biosynthesis. May increase the efficiency of translation by recycling ribosomes from one round of translation to another. This is Ribosome-recycling factor from Roseobacter denitrificans (strain ATCC 33942 / OCh 114) (Erythrobacter sp. (strain OCh 114)).